A 203-amino-acid polypeptide reads, in one-letter code: uncharacterized protein (203 aa).

This is an uncharacterized protein from Methanocaldococcus jannaschii (strain ATCC 43067 / DSM 2661 / JAL-1 / JCM 10045 / NBRC 100440) (Methanococcus jannaschii).